Reading from the N-terminus, the 328-residue chain is Biotin synthase (328 aa).

Positions Phe48 to Arg277 constitute a Radical SAM core domain. Residues Cys66, Cys70, and Cys73 each contribute to the [4Fe-4S] cluster site. 2 residues coordinate [2Fe-2S] cluster: Ser142 and Cys202.

The protein belongs to the radical SAM superfamily. Biotin synthase family. In terms of assembly, homodimer. Requires [4Fe-4S] cluster as cofactor. [2Fe-2S] cluster serves as cofactor.

The catalysed reaction is (4R,5S)-dethiobiotin + (sulfur carrier)-SH + 2 reduced [2Fe-2S]-[ferredoxin] + 2 S-adenosyl-L-methionine = (sulfur carrier)-H + biotin + 2 5'-deoxyadenosine + 2 L-methionine + 2 oxidized [2Fe-2S]-[ferredoxin]. It participates in cofactor biosynthesis; biotin biosynthesis; biotin from 7,8-diaminononanoate: step 2/2. Functionally, catalyzes the conversion of dethiobiotin (DTB) to biotin by the insertion of a sulfur atom into dethiobiotin via a radical-based mechanism. This chain is Biotin synthase, found in Citrifermentans bemidjiense (strain ATCC BAA-1014 / DSM 16622 / JCM 12645 / Bem) (Geobacter bemidjiensis).